Reading from the N-terminus, the 167-residue chain is Zinc finger CCCH domain-containing protein 3 (167 aa).

A C3H1-type zinc finger spans residues 63–91 (AAAIGVCQHFVRTGTCKFGDSCRYFHPKP). Over residues 89–101 (PKPPPANPGPAPS) the composition is skewed to pro residues. Positions 89–167 (PKPPPANPGP…YPPFPFVDWG (79 aa)) are disordered. Polar residues predominate over residues 108 to 120 (MAQQSNIQGSQPN). A compositionally biased stretch (pro residues) spans 149–167 (SLRPPPEGGYPPFPFVDWG).

This Oryza sativa subsp. japonica (Rice) protein is Zinc finger CCCH domain-containing protein 3.